Reading from the N-terminus, the 322-residue chain is Fructose-1,6-bisphosphatase class 1 (322 aa).

Residues glutamate 84, aspartate 103, leucine 105, and aspartate 106 each coordinate Mg(2+). Residues 106 to 109 (DGSS), asparagine 198, and lysine 264 contribute to the substrate site. A Mg(2+)-binding site is contributed by glutamate 270.

The protein belongs to the FBPase class 1 family. As to quaternary structure, homotetramer. It depends on Mg(2+) as a cofactor.

It is found in the cytoplasm. It catalyses the reaction beta-D-fructose 1,6-bisphosphate + H2O = beta-D-fructose 6-phosphate + phosphate. Its pathway is carbohydrate biosynthesis; gluconeogenesis. This is Fructose-1,6-bisphosphatase class 1 from Colwellia psychrerythraea (strain 34H / ATCC BAA-681) (Vibrio psychroerythus).